The following is a 364-amino-acid chain: UDP-N-acetylglucosamine--N-acetylmuramyl-(pentapeptide) pyrophosphoryl-undecaprenol N-acetylglucosamine transferase (364 aa).

UDP-N-acetyl-alpha-D-glucosamine-binding positions include Thr-10–Gly-12, Asn-124, Arg-165, Ser-193, Ile-248, and Gln-293.

This sequence belongs to the glycosyltransferase 28 family. MurG subfamily.

It localises to the cell inner membrane. The catalysed reaction is di-trans,octa-cis-undecaprenyl diphospho-N-acetyl-alpha-D-muramoyl-L-alanyl-D-glutamyl-meso-2,6-diaminopimeloyl-D-alanyl-D-alanine + UDP-N-acetyl-alpha-D-glucosamine = di-trans,octa-cis-undecaprenyl diphospho-[N-acetyl-alpha-D-glucosaminyl-(1-&gt;4)]-N-acetyl-alpha-D-muramoyl-L-alanyl-D-glutamyl-meso-2,6-diaminopimeloyl-D-alanyl-D-alanine + UDP + H(+). Its pathway is cell wall biogenesis; peptidoglycan biosynthesis. Functionally, cell wall formation. Catalyzes the transfer of a GlcNAc subunit on undecaprenyl-pyrophosphoryl-MurNAc-pentapeptide (lipid intermediate I) to form undecaprenyl-pyrophosphoryl-MurNAc-(pentapeptide)GlcNAc (lipid intermediate II). This Geobacter metallireducens (strain ATCC 53774 / DSM 7210 / GS-15) protein is UDP-N-acetylglucosamine--N-acetylmuramyl-(pentapeptide) pyrophosphoryl-undecaprenol N-acetylglucosamine transferase.